The primary structure comprises 262 residues: Small ribosomal subunit protein uS2 (262 aa).

Positions N240 to N262 are disordered. The segment covering E243–E254 has biased composition (acidic residues).

Belongs to the universal ribosomal protein uS2 family.

The sequence is that of Small ribosomal subunit protein uS2 from Staphylococcus haemolyticus (strain JCSC1435).